Reading from the N-terminus, the 82-residue chain is DNA-directed RNA polymerase subunit omega (82 aa).

Belongs to the RNA polymerase subunit omega family. The RNAP catalytic core consists of 2 alpha, 1 beta, 1 beta' and 1 omega subunit. When a sigma factor is associated with the core the holoenzyme is formed, which can initiate transcription.

The catalysed reaction is RNA(n) + a ribonucleoside 5'-triphosphate = RNA(n+1) + diphosphate. Its function is as follows. Promotes RNA polymerase assembly. Latches the N- and C-terminal regions of the beta' subunit thereby facilitating its interaction with the beta and alpha subunits. In Lachnoclostridium phytofermentans (strain ATCC 700394 / DSM 18823 / ISDg) (Clostridium phytofermentans), this protein is DNA-directed RNA polymerase subunit omega.